We begin with the raw amino-acid sequence, 721 residues long: Methionine--tRNA ligase (721 aa).

A 'HIGH' region motif is present at residues proline 27–histidine 37. Zn(2+)-binding residues include cysteine 158, cysteine 161, cysteine 171, and cysteine 174. Residues lysine 348 to serine 352 carry the 'KMSKS' region motif. Lysine 351 provides a ligand contact to ATP. The region spanning aspartate 615–lysine 721 is the tRNA-binding domain.

It belongs to the class-I aminoacyl-tRNA synthetase family. MetG type 1 subfamily. In terms of assembly, homodimer. Zn(2+) serves as cofactor.

The protein resides in the cytoplasm. It catalyses the reaction tRNA(Met) + L-methionine + ATP = L-methionyl-tRNA(Met) + AMP + diphosphate. Is required not only for elongation of protein synthesis but also for the initiation of all mRNA translation through initiator tRNA(fMet) aminoacylation. This Burkholderia vietnamiensis (strain G4 / LMG 22486) (Burkholderia cepacia (strain R1808)) protein is Methionine--tRNA ligase.